The chain runs to 201 residues: Lipopolysaccharide core heptose(II)-phosphate phosphatase (201 aa).

A signal peptide spans Met-1–Ala-33.

This sequence belongs to the phosphoglycerate mutase family. Ais subfamily.

Its subcellular location is the periplasm. The protein operates within bacterial outer membrane biogenesis; lipopolysaccharide metabolism. Functionally, catalyzes the dephosphorylation of heptose(II) of the outer membrane lipopolysaccharide core. The sequence is that of Lipopolysaccharide core heptose(II)-phosphate phosphatase from Salmonella typhi.